The chain runs to 201 residues: uncharacterized protein (201 aa).

Over residues 64-78 (DNEIKEEEESEEEEK) the composition is skewed to acidic residues. 2 disordered regions span residues 64–114 (DNEI…FKNA) and 182–201 (ILPG…LSKQ). Basic residues predominate over residues 96-106 (RNKHGRNRNPR). Residues 189–201 (GNTETVDQGLSKQ) are compositionally biased toward polar residues.

This is an uncharacterized protein from Ostreid herpesvirus 1 (isolate France) (OsHV-1).